The primary structure comprises 492 residues: Proline--tRNA ligase (492 aa).

Belongs to the class-II aminoacyl-tRNA synthetase family. ProS type 3 subfamily. In terms of assembly, homodimer.

The protein localises to the cytoplasm. The catalysed reaction is tRNA(Pro) + L-proline + ATP = L-prolyl-tRNA(Pro) + AMP + diphosphate. Catalyzes the attachment of proline to tRNA(Pro) in a two-step reaction: proline is first activated by ATP to form Pro-AMP and then transferred to the acceptor end of tRNA(Pro). The protein is Proline--tRNA ligase of Christiangramia forsetii (strain DSM 17595 / CGMCC 1.15422 / KT0803) (Gramella forsetii).